We begin with the raw amino-acid sequence, 718 residues long: DNA ligase (718 aa).

NAD(+)-binding positions include 44 to 48 (DADYD), 93 to 94 (SL), and Glu-127. The active-site N6-AMP-lysine intermediate is the Lys-129. 4 residues coordinate NAD(+): Arg-150, Glu-186, Lys-302, and Lys-326. Residues Cys-432, Cys-435, Cys-456, and Cys-462 each coordinate Zn(2+). In terms of domain architecture, BRCT spans 640 to 718 (TAGSPVAGKT…EDQWLALISG (79 aa)).

Belongs to the NAD-dependent DNA ligase family. LigA subfamily. The cofactor is Mg(2+). It depends on Mn(2+) as a cofactor.

The enzyme catalyses NAD(+) + (deoxyribonucleotide)n-3'-hydroxyl + 5'-phospho-(deoxyribonucleotide)m = (deoxyribonucleotide)n+m + AMP + beta-nicotinamide D-nucleotide.. In terms of biological role, DNA ligase that catalyzes the formation of phosphodiester linkages between 5'-phosphoryl and 3'-hydroxyl groups in double-stranded DNA using NAD as a coenzyme and as the energy source for the reaction. It is essential for DNA replication and repair of damaged DNA. This chain is DNA ligase, found in Rhizobium johnstonii (strain DSM 114642 / LMG 32736 / 3841) (Rhizobium leguminosarum bv. viciae).